Here is a 117-residue protein sequence, read N- to C-terminus: Protein OPG035 (117 aa).

Belongs to the poxviridae OPG035 family.

In terms of biological role, bcl-2-like protein which contributes to virulence by preventing host NF-kappa-B activation in response to pro-inflammatory stimuli such as TNF-alpha or IL1B. The protein is Protein OPG035 (OPG035) of Homo sapiens (Human).